Consider the following 269-residue polypeptide: MAQLPPRAPSAAAAAGQEWSAMAAAGEFLGFAAARRGAHRRSASDSAAFLMEAAVPMDDVIVGVGGGGEFDRLDDEQLMSMFSDVEAPAVSDGGGERGPAGEAHLMDMGDGDDGMGATSPAGAGAMAAAAAAAAADGIADPKRVKRILANRQSAQRSRVRKLQYISELERSVTTLQMEVSALSPRVAFLDHQRSLLTVGNSHLKQRIAALAQDKIFKDAHQEALKKEIERLRQVYHQQQIKATGGADIATAASMQAKHELLACEGAAMR.

In terms of domain architecture, bZIP spans 140-196 (DPKRVKRILANRQSAQRSRVRKLQYISELERSVTTLQMEVSALSPRVAFLDHQRSLL). The basic motif stretch occupies residues 142 to 161 (KRVKRILANRQSAQRSRVRK). The segment at 168-196 (LERSVTTLQMEVSALSPRVAFLDHQRSLL) is leucine-zipper.

Expressed in roots and shoots.

Its subcellular location is the nucleus. Transcription regulator. The protein is Basic leucine zipper 19 (BZIP19) of Oryza sativa subsp. japonica (Rice).